The primary structure comprises 370 residues: Putative glutamate--cysteine ligase 2 (370 aa).

This sequence belongs to the glutamate--cysteine ligase type 2 family. YbdK subfamily.

It carries out the reaction L-cysteine + L-glutamate + ATP = gamma-L-glutamyl-L-cysteine + ADP + phosphate + H(+). Its function is as follows. ATP-dependent carboxylate-amine ligase which exhibits weak glutamate--cysteine ligase activity. The chain is Putative glutamate--cysteine ligase 2 from Janthinobacterium sp. (strain Marseille) (Minibacterium massiliensis).